We begin with the raw amino-acid sequence, 313 residues long: MDNKKRLAYAIIRFLHDQLRHGELSSDAQESLEVAIQCLETAFGVTVEDSDLALPQTLPEIFEAAAAGKELPPDLRSPQETPPSEEDSAEAERLKTEGNEQMKVENFEAAVHFYGKAIELNPANAVYFCNRAAAYSKLGNYAGAVQDCERAICIDPSYSKAYGRMGLALSSLNKHTEAVAYYRKALELDPDNETYKSNLKVAELRLREAPSPTGGVGSFDIAGLLNNPSFMSMASNLMNNPQVQQLMSGMISGGHNPLGTPGTSPSQNDLASLIQAGQQFAQQMQQQNPELIEQLRSQIRSRTPSASNDDQQE.

The tract at residues 69-97 (KELPPDLRSPQETPPSEEDSAEAERLKTE) is disordered. At Ser77 the chain carries Phosphoserine. Thr81 is subject to Phosphothreonine. Residue Ser84 is modified to Phosphoserine. 3 TPR repeats span residues 91–124 (AERL…NPAN), 125–158 (AVYF…DPSY), and 159–192 (SKAY…DPDN). At Lys137 the chain carries N6-acetyllysine. A Phosphoserine modification is found at Ser301. At Thr303 the chain carries Phosphothreonine. Residue Ser305 is modified to Phosphoserine.

The protein belongs to the SGT family. As to quaternary structure, homodimer. Homooligomer. Interacts with DNAJC5 and DNAJC5B. Interacts (via TPR repeats) with HSP90AA1. Interacts (via Gln-rich region) with SLC2A1. Interacts with HSP90AB1. Interacts (via TPR repeats) with HSPA8/Hsc70; the interaction is direct. Interacts with BAG6 (via ubiquitin-like domain); interaction prevents interaction between BAG6 and RNF126. Forms a multiprotein complex, at least composed of DNAJB12, DNAJB14, HSPA8/Hsc70 and SGTA; interaction with DNAJB14 and HSPA8/Hsc70 is direct.

The protein localises to the cytoplasm. The protein resides in the nucleus. Functionally, co-chaperone that binds misfolded and hydrophobic patches-containing client proteins in the cytosol. Mediates their targeting to the endoplasmic reticulum but also regulates their sorting to the proteasome when targeting fails. Functions in tail-anchored/type II transmembrane proteins membrane insertion constituting with ASNA1 and the BAG6 complex a targeting module. Functions upstream of the BAG6 complex and ASNA1, binding more rapidly the transmembrane domain of newly synthesized proteins. It is also involved in the regulation of the endoplasmic reticulum-associated misfolded protein catabolic process via its interaction with BAG6: collaborates with the BAG6 complex to maintain hydrophobic substrates in non-ubiquitinated states. Competes with RNF126 for interaction with BAG6, preventing the ubiquitination of client proteins associated with the BAG6 complex. Binds directly to HSC70 and HSP70 and regulates their ATPase activity. This is Small glutamine-rich tetratricopeptide repeat-containing protein alpha (SGTA) from Bos taurus (Bovine).